The sequence spans 150 residues: Transcriptional repressor NrdR (150 aa).

The segment at 3-34 (CPFCQHDHSKVIDSRVIDAGSAIRRRRECSKC) is a zinc-finger region. Residues 46–136 (LLVVKRNGVT…VYKSFDSADD (91 aa)) enclose the ATP-cone domain.

The protein belongs to the NrdR family. The cofactor is Zn(2+).

Its function is as follows. Negatively regulates transcription of bacterial ribonucleotide reductase nrd genes and operons by binding to NrdR-boxes. This is Transcriptional repressor NrdR from Corynebacterium glutamicum (strain ATCC 13032 / DSM 20300 / JCM 1318 / BCRC 11384 / CCUG 27702 / LMG 3730 / NBRC 12168 / NCIMB 10025 / NRRL B-2784 / 534).